Reading from the N-terminus, the 170-residue chain is Ribosome maturation factor RimM (170 aa).

The PRC barrel domain maps to 92-163 (KEGWYYFELE…RMDVELPPGL (72 aa)).

Belongs to the RimM family. Binds ribosomal protein uS19.

It localises to the cytoplasm. Its function is as follows. An accessory protein needed during the final step in the assembly of 30S ribosomal subunit, possibly for assembly of the head region. Essential for efficient processing of 16S rRNA. May be needed both before and after RbfA during the maturation of 16S rRNA. It has affinity for free ribosomal 30S subunits but not for 70S ribosomes. This chain is Ribosome maturation factor RimM, found in Desulfitobacterium hafniense (strain Y51).